Consider the following 76-residue polypeptide: DNA gyrase inhibitor YacG (76 aa).

Residues cysteine 7, cysteine 10, cysteine 26, and cysteine 30 each coordinate Zn(2+).

The protein belongs to the DNA gyrase inhibitor YacG family. In terms of assembly, interacts with GyrB. Requires Zn(2+) as cofactor.

In terms of biological role, inhibits all the catalytic activities of DNA gyrase by preventing its interaction with DNA. Acts by binding directly to the C-terminal domain of GyrB, which probably disrupts DNA binding by the gyrase. The polypeptide is DNA gyrase inhibitor YacG (Pseudoalteromonas translucida (strain TAC 125)).